Consider the following 369-residue polypeptide: Uroporphyrinogen decarboxylase (369 aa).

Positions 39, 41, 43, 52, 88, 166, 221, and 341 each coordinate coproporphyrinogen I. Coproporphyrinogen III contacts are provided by R39, A41, and R43. Residues D88, Y166, S221, and H341 each contribute to the coproporphyrinogen III site.

It belongs to the uroporphyrinogen decarboxylase family. In terms of assembly, homodimer.

The protein localises to the cytoplasm. Its subcellular location is the cytosol. The catalysed reaction is uroporphyrinogen III + 4 H(+) = coproporphyrinogen III + 4 CO2. It catalyses the reaction uroporphyrinogen I + 4 H(+) = coproporphyrinogen I + 4 CO2. Its pathway is porphyrin-containing compound metabolism; protoporphyrin-IX biosynthesis; coproporphyrinogen-III from 5-aminolevulinate: step 4/4. In terms of biological role, catalyzes the sequential decarboxylation of the four acetate side chains of uroporphyrinogen to form coproporphyrinogen and participates in the fifth step in the heme biosynthetic pathway. Isomer I or isomer III of uroporphyrinogen may serve as substrate, but only coproporphyrinogen III can ultimately be converted to heme. In vitro also decarboxylates pentacarboxylate porphyrinogen I. This chain is Uroporphyrinogen decarboxylase, found in Danio rerio (Zebrafish).